Here is a 338-residue protein sequence, read N- to C-terminus: Ketol-acid reductoisomerase (NADP(+)) (338 aa).

The 181-residue stretch at 1–181 (MKVFYDKDCD…GGGRTGIIET (181 aa)) folds into the KARI N-terminal Rossmann domain. NADP(+)-binding positions include 24–27 (YGSQ), R47, S50, T52, and 82–85 (DEFQ). H107 is an active-site residue. An NADP(+)-binding site is contributed by G133. Residues 182–327 (TFKDETETDL…EQLRSMMPWI (146 aa)) form the KARI C-terminal knotted domain. D190, E194, E226, and E230 together coordinate Mg(2+). S251 lines the substrate pocket.

The protein belongs to the ketol-acid reductoisomerase family. Mg(2+) serves as cofactor.

The catalysed reaction is (2R)-2,3-dihydroxy-3-methylbutanoate + NADP(+) = (2S)-2-acetolactate + NADPH + H(+). The enzyme catalyses (2R,3R)-2,3-dihydroxy-3-methylpentanoate + NADP(+) = (S)-2-ethyl-2-hydroxy-3-oxobutanoate + NADPH + H(+). It functions in the pathway amino-acid biosynthesis; L-isoleucine biosynthesis; L-isoleucine from 2-oxobutanoate: step 2/4. The protein operates within amino-acid biosynthesis; L-valine biosynthesis; L-valine from pyruvate: step 2/4. In terms of biological role, involved in the biosynthesis of branched-chain amino acids (BCAA). Catalyzes an alkyl-migration followed by a ketol-acid reduction of (S)-2-acetolactate (S2AL) to yield (R)-2,3-dihydroxy-isovalerate. In the isomerase reaction, S2AL is rearranged via a Mg-dependent methyl migration to produce 3-hydroxy-3-methyl-2-ketobutyrate (HMKB). In the reductase reaction, this 2-ketoacid undergoes a metal-dependent reduction by NADPH to yield (R)-2,3-dihydroxy-isovalerate. This chain is Ketol-acid reductoisomerase (NADP(+)), found in Pseudomonas entomophila (strain L48).